Reading from the N-terminus, the 264-residue chain is Thymidylate synthase (264 aa).

Arg-21 is a dUMP binding site. A (6R)-5,10-methylene-5,6,7,8-tetrahydrofolate-binding site is contributed by His-51. A dUMP-binding site is contributed by 126–127; that stretch reads RR. Cys-146 acts as the Nucleophile in catalysis. Residues 166–169, Asn-177, and 207–209 each bind dUMP; these read RSAD and HLY. Asp-169 is a binding site for (6R)-5,10-methylene-5,6,7,8-tetrahydrofolate. Ala-263 is a binding site for (6R)-5,10-methylene-5,6,7,8-tetrahydrofolate.

Belongs to the thymidylate synthase family. Bacterial-type ThyA subfamily. In terms of assembly, homodimer.

The protein resides in the cytoplasm. The catalysed reaction is dUMP + (6R)-5,10-methylene-5,6,7,8-tetrahydrofolate = 7,8-dihydrofolate + dTMP. The protein operates within pyrimidine metabolism; dTTP biosynthesis. Functionally, catalyzes the reductive methylation of 2'-deoxyuridine-5'-monophosphate (dUMP) to 2'-deoxythymidine-5'-monophosphate (dTMP) while utilizing 5,10-methylenetetrahydrofolate (mTHF) as the methyl donor and reductant in the reaction, yielding dihydrofolate (DHF) as a by-product. This enzymatic reaction provides an intracellular de novo source of dTMP, an essential precursor for DNA biosynthesis. This chain is Thymidylate synthase, found in Methylorubrum extorquens (strain CM4 / NCIMB 13688) (Methylobacterium extorquens).